A 156-amino-acid polypeptide reads, in one-letter code: Probable succinate transporter subunit YjjB (156 aa).

Helical transmembrane passes span 7–27 (WALL…AMVF), 54–74 (FGMN…IIGI), 86–106 (VFTV…TAMI), and 128–148 (FLKA…PGIW).

It belongs to the ThrE exporter (TC 2.A.79) family. In terms of assembly, the transporter is composed of YjjB and YjjP.

It localises to the cell inner membrane. Functionally, involved in succinate export with YjjP. Both proteins are required for export. The protein is Probable succinate transporter subunit YjjB of Pectobacterium carotovorum subsp. carotovorum (strain PC1).